The sequence spans 290 residues: N-acetylmannosamine kinase (290 aa).

ATP-binding positions include 6-13 and 132-139; these read ALDIGGTK and GVGGGIIL. 4 residues coordinate Zn(2+): H156, C166, C168, and C173.

The protein belongs to the ROK (NagC/XylR) family. NanK subfamily. As to quaternary structure, homodimer.

It catalyses the reaction an N-acyl-D-mannosamine + ATP = an N-acyl-D-mannosamine 6-phosphate + ADP + H(+). It participates in amino-sugar metabolism; N-acetylneuraminate degradation; D-fructose 6-phosphate from N-acetylneuraminate: step 2/5. In terms of biological role, catalyzes the phosphorylation of N-acetylmannosamine (ManNAc) to ManNAc-6-P. The sequence is that of N-acetylmannosamine kinase from Yersinia pestis (strain Pestoides F).